The primary structure comprises 990 residues: Importin beta-like protein kap111 (990 aa).

It belongs to the importin beta family.

It is found in the nucleus. Functions as a component of the nuclear pore complex (NPC). NPC components, collectively referred to as nucleoporins (NUPs), can play the role of both NPC structural components and of docking or interaction partners for transiently associated nuclear transport factors. Active directional transport is assured by both, a Phe-Gly (FG) repeat affinity gradient for these transport factors across the NPC and a transport cofactor concentration gradient across the nuclear envelope. In Schizosaccharomyces pombe (strain 972 / ATCC 24843) (Fission yeast), this protein is Importin beta-like protein kap111 (kap111).